The following is a 701-amino-acid chain: Meprin A subunit beta (701 aa).

Positions 1 to 22 are cleaved as a signal peptide; that stretch reads MDLWNLSWFLFLDALLVISGLA. Positions 23–61 are excised as a propeptide; it reads TPENFDVDGGMDQDIFDINEGLGLDLFEGDIRLDRAQIR. Residues 23–652 are Extracellular-facing; it reads TPENFDVDGG…CEKRGSTRDT (630 aa). The Peptidase M12A domain maps to 62–256; the sequence is NSIIGEKYRW…LKLNQLYNCS (195 aa). Disulfide bonds link cysteine 103–cysteine 255, cysteine 124–cysteine 144, and cysteine 265–cysteine 427. Residue histidine 152 participates in Zn(2+) binding. Glutamate 153 is an active-site residue. The Zn(2+) site is built by histidine 156 and histidine 162. N-linked (GlcNAc...) asparagine glycosylation is found at asparagine 218, asparagine 254, asparagine 370, asparagine 421, asparagine 436, asparagine 445, asparagine 547, and asparagine 592. An MAM domain is found at 260–429; sequence SFMDSCSFEL…INLSETRCPH (170 aa). One can recognise an MATH domain in the interval 430 to 585; sequence HIWHIRNFTQ…GDDVYILLTV (156 aa). O-linked (GalNAc...) serine glycosylation occurs at serine 593. Threonine 594 and threonine 599 each carry an O-linked (GalNAc...) threonine glycan. Positions 595-607 are required for proteolytic processing; the sequence is QIQLTPAPSVQDL. An O-linked (GalNAc...) serine glycan is attached at serine 603. The region spanning 604 to 644 is the EGF-like domain; the sequence is VQDLCSKTTCKNDGVCTVRDGKAECRCQSGEDWWYMGERCE. Disulfide bonds link cysteine 608–cysteine 619, cysteine 613–cysteine 628, and cysteine 630–cysteine 643. A helical transmembrane segment spans residues 653 to 673; it reads IVIAVSSTVAVFALMLIITLV. The Cytoplasmic portion of the chain corresponds to 674–701; it reads SVYCTRKKYRERMSSNRPNLTPQNQHAF. Threonine 694 carries the phosphothreonine modification.

Homotetramer consisting of disulfide-linked beta subunits, or heterotetramer of two alpha and two beta subunits formed by non-covalent association of two disulfide-linked heterodimers. Interacts with MBL2 through its carbohydrate moiety. This interaction may inhibit its catalytic activity. Interacts with TSPAN8. It depends on Zn(2+) as a cofactor. Post-translationally, phosphorylated by PKC at multiple sites of its cytoplasmic part. Phosphorylation dcreases activity at the cell surface, leading to diminished substrate cleavage. In terms of processing, N-glycosylated; contains high mannose and/or complex biantennary structures. O-glycosylation protect the C-terminal region from proteolytic cleavage and diminish secretion, this seems to be specific to human. Post-translationally, proteolytically activated by trypsin in the intestinal lumen and kallikrein-related peptidases in other tissues. The major site of expression is the brush border membrane of small intestinal and kidney epithelial cells.

Its subcellular location is the cell membrane. It is found in the secreted. It catalyses the reaction Hydrolysis of proteins, including azocasein, and peptides. Hydrolysis of 5-His-|-Leu-6, 6-Leu-|-Cys-7, 14-Ala-|-Leu-15 and 19-Cys-|-Gly-20 bonds in insulin B chain.. Strongly inhibited by fetuin-A/AHSG. Its function is as follows. Membrane metallopeptidase that sheds many membrane-bound proteins. Exhibits a strong preference for acidic amino acids at the P1' position. Known substrates include: FGF19, VGFA, IL1B, IL18, procollagen I and III, E-cadherin, KLK7, gastrin, ADAM10, tenascin-C. The presence of several pro-inflammatory cytokine among substrates implicate MEP1B in inflammation. It is also involved in tissue remodeling due to its capability to degrade extracellular matrix components. Also cleaves the amyloid precursor protein/APP, thereby releasing neurotoxic amyloid beta peptides. In Homo sapiens (Human), this protein is Meprin A subunit beta (MEP1B).